The sequence spans 465 residues: GTPase Der (465 aa).

2 consecutive EngA-type G domains span residues 3 to 167 and 179 to 352; these read PLVA…PERS and IHIA…VSAL. GTP is bound by residues 9–16, 57–61, 119–122, 185–192, 232–236, and 297–300; these read GRPNVGKS, DTGGM, NKID, DTAGL, and NKWD. Residues 353–437 enclose the KH-like domain; the sequence is RQFSTSEVNK…PVRFLFREGD (85 aa).

It belongs to the TRAFAC class TrmE-Era-EngA-EngB-Septin-like GTPase superfamily. EngA (Der) GTPase family. As to quaternary structure, associates with the 50S ribosomal subunit.

GTPase that plays an essential role in the late steps of ribosome biogenesis. This Xylella fastidiosa (strain M12) protein is GTPase Der.